We begin with the raw amino-acid sequence, 556 residues long: Formate--tetrahydrofolate ligase 1 (556 aa).

65 to 72 contributes to the ATP binding site; the sequence is TPAGEGKT.

Belongs to the formate--tetrahydrofolate ligase family.

The enzyme catalyses (6S)-5,6,7,8-tetrahydrofolate + formate + ATP = (6R)-10-formyltetrahydrofolate + ADP + phosphate. Its pathway is one-carbon metabolism; tetrahydrofolate interconversion. The sequence is that of Formate--tetrahydrofolate ligase 1 from Desulfitobacterium hafniense (strain Y51).